A 1987-amino-acid chain; its full sequence is Transcription factor 20 (1987 aa).

Positions 1-22 (MQSFREQSSYHGNQQSYPQEVH) are enriched in polar residues. Disordered stretches follow at residues 1–79 (MQSF…QGYQ), 96–432 (DTVA…GNVP), 446–481 (LSPT…DPGL), 502–816 (LLSD…GTAR), and 844–891 (PHWG…SLSE). The span at 51-74 (TGSSSSGRRGTAAAAAAMASETSG) shows a compositional bias: low complexity. Arg59 bears the Omega-N-methylarginine mark. The span at 121 to 142 (QGSSFGNQYASEGHVSQFQAQH) shows a compositional bias: polar residues. Low complexity predominate over residues 163 to 205 (SAQYQQQASSQQQQQQQQQQQQQQQQQQQQVQQLRQQLYQSHQ). Positions 206-235 (PLPQTTGQPASGSSHLQPMQRPSTLPSSAG) are enriched in polar residues. The span at 248–277 (QSSASSSSSSSFPSPQRFSQSGQSYDGSYS) shows a compositional bias: low complexity. The segment covering 289-311 (VGSNAQAYGTQSNYSYQPQSMKN) has biased composition (polar residues). Lys316 participates in a covalent cross-link: Glycyl lysine isopeptide (Lys-Gly) (interchain with G-Cter in SUMO2). The segment covering 322-354 (QQGQQQQQQQPQPQQQQPQQQQQQQQQQQHPPQ) has biased composition (low complexity). Positions 357-377 (MQYTNAATKMPLQSQVGQYNQ) are enriched in polar residues. The span at 396–416 (SNPSPAASVVQSPSCSSTPSP) shows a compositional bias: low complexity. A compositionally biased stretch (polar residues) spans 417 to 432 (LMQSGENLQCGQGNVP). The span at 446 to 456 (LSPTPSMMPSP) shows a compositional bias: low complexity. Residues Ser447 and Ser458 each carry the phosphoserine modification. 3 stretches are compositionally biased toward polar residues: residues 526-537 (SCTNSEGSSQPE), 566-576 (LSGQSTSSDTT), and 585-605 (AGSS…TSPA). A phosphoserine mark is found at Ser567, Ser588, Ser603, and Ser612. Polar residues predominate over residues 618-627 (TSLSSEGNTK). At Lys631 the chain carries N6-acetyllysine. Residues 645–657 (RVEKSGGQDKGSQ) show a composition bias toward basic and acidic residues. Residues 666 to 682 (RPPSNSGVKEISHTSLP) show a composition bias toward polar residues. Ser669 carries the post-translational modification Phosphoserine. Residues 693–715 (GNKNGDNNSSNHNGEGNGPSSHS) are compositionally biased toward low complexity. Residues 722-731 (TGRTEPSKSP) show a composition bias toward polar residues. Glycyl lysine isopeptide (Lys-Gly) (interchain with G-Cter in SUMO2) cross-links involve residues Lys739, Lys762, Lys777, Lys852, Lys861, and Lys873. Positions 761–777 (EKGDFGSHGERKGRNEK) are enriched in basic and acidic residues. Phosphoserine is present on Ser900. Residues Lys949 and Lys951 each participate in a glycyl lysine isopeptide (Lys-Gly) (interchain with G-Cter in SUMO2) cross-link. The segment at 949-1065 (KLKSQSGQIK…GDPHHMNPHM (117 aa)) is disordered. A Glycyl lysine isopeptide (Lys-Gly) (interchain with G-Cter in SUMO1); alternate cross-link involves residue Lys958. Lys958 is covalently cross-linked (Glycyl lysine isopeptide (Lys-Gly) (interchain with G-Cter in SUMO2); alternate). A compositionally biased stretch (basic and acidic residues) spans 974 to 989 (KSGDHCHPTSIKHETY). A Glycyl lysine isopeptide (Lys-Gly) (interchain with G-Cter in SUMO2) cross-link involves residue Lys985. Residues Ser994 and Ser1033 each carry the phosphoserine modification. Residue Lys1043 forms a Glycyl lysine isopeptide (Lys-Gly) (interchain with G-Cter in SUMO2) linkage. At Arg1052 the chain carries Omega-N-methylarginine. A Phosphoserine modification is found at Ser1081. Glycyl lysine isopeptide (Lys-Gly) (interchain with G-Cter in SUMO2) cross-links involve residues Lys1114, Lys1126, Lys1165, Lys1201, Lys1206, Lys1211, Lys1238, Lys1259, Lys1295, and Lys1302. Residues 1136-1372 (VIAAAQHRQE…SPAKTKILPP (237 aa)) are disordered. Over residues 1158-1170 (DRVRSPLKNDKDG) the composition is skewed to basic and acidic residues. Positions 1198–1219 (LPAKSMELKHSSQKLQESCWDL) are leucine-zipper. The short motif at 1282 to 1295 (RRRVRSFISPIPSK) is the Nuclear localization signal element. 2 stretches are compositionally biased toward basic and acidic residues: residues 1305–1321 (NADD…EGAD) and 1332–1346 (HSQD…DSSK). A Phosphoserine modification is found at Ser1333. A Glycyl lysine isopeptide (Lys-Gly) (interchain with G-Cter in SUMO2) cross-link involves residue Lys1337. Position 1363 is a phosphoserine (Ser1363). Lys1366 participates in a covalent cross-link: Glycyl lysine isopeptide (Lys-Gly) (interchain with G-Cter in SUMO2). Phosphoserine is present on Ser1389. Residues 1415 to 1434 (SLKSGPPEGGTVATQEAEME) are disordered. Residues Lys1417, Lys1437, Lys1456, and Lys1474 each participate in a glycyl lysine isopeptide (Lys-Gly) (interchain with G-Cter in SUMO2) cross-link. Positions 1446–1636 (SVTNQESNVE…KQAVPIVEPQ (191 aa)) are disordered. Over residues 1463 to 1479 (EEWRGSGDDKVKTEAHV) the composition is skewed to basic and acidic residues. The segment covering 1481–1501 (TASTGKEPSGTMTSTASQKPG) has biased composition (polar residues). Lys1538 is covalently cross-linked (Glycyl lysine isopeptide (Lys-Gly) (interchain with G-Cter in SUMO2)). The residue at position 1550 (Ser1550) is a Phosphoserine. Lys1552 is covalently cross-linked (Glycyl lysine isopeptide (Lys-Gly) (interchain with G-Cter in SUMO2)). The a.T hook DNA-binding region spans 1565–1579 (GKKKGRPIGSVNKQK). Positions 1584 to 1594 (QPPPPPQPPQM) are enriched in pro residues. Positions 1604–1628 (KPKKQRQRRERRKPGAQPRKRKTKQ) match the Nuclear localization signal motif. A compositionally biased stretch (basic residues) spans 1606–1627 (KKQRQRRERRKPGAQPRKRKTK). Lys1641 participates in a covalent cross-link: Glycyl lysine isopeptide (Lys-Gly) (interchain with G-Cter in SUMO2). Disordered stretches follow at residues 1685–1710 (QTKL…SKVL) and 1760–1865 (TLPK…GPEL). Ser1697 is modified (phosphoserine). 3 positions are modified to phosphothreonine: Thr1699, Thr1790, and Thr1792. A Nuclear localization signal motif is present at residues 1812-1819 (RFKRRHRS). The segment covering 1850 to 1859 (DTKPSVPTTS) has biased composition (polar residues). The C2HC pre-PHD-type; degenerate zinc-finger motif lies at 1856 to 1892 (PTTSEGGPELELQIPELPLDSNEFWVHEGCILWANGI). A PHD-type zinc finger spans residues 1912 to 1960 (MKCSHCQEAGATLGCYNKGCSFRYHYPCAIDADCLLHEENFSVRCPKHK). The segment at 1966–1987 (PLPPLQNKTAKGSLSTEQSERG) is disordered. Over residues 1971–1987 (QNKTAKGSLSTEQSERG) the composition is skewed to polar residues.

As to quaternary structure, homodimer. Interacts with RNF4 and JUN. Binds to the regulatory region of MMP3. In terms of tissue distribution, expressed in brain, lung, liver, kidney and testes.

It is found in the nucleus. Its function is as follows. Transcriptional activator that binds to the regulatory region of MMP3 and thereby controls stromelysin expression. It stimulates the activity of various transcriptional activators such as JUN, SP1, PAX6 and ETS1, suggesting a function as a coactivator. This is Transcription factor 20 (Tcf20) from Mus musculus (Mouse).